The chain runs to 105 residues: Zinc metalloproteinase/disintegrin (105 aa).

Residues 1–3 (DEP) form the Peptidase M12B domain. A Disintegrin domain is found at 11-96 (PPVCGNYFVE…AECTDRFQRN (86 aa)). 6 cysteine pairs are disulfide-bonded: Cys-25–Cys-43, Cys-27–Cys-38, Cys-37–Cys-60, Cys-51–Cys-57, Cys-56–Cys-82, and Cys-69–Cys-89. The short motif at 75 to 77 (ECD) is the D/ECD-tripeptide element. The propeptide occupies 99–105 (PCQNNNG).

Belongs to the venom metalloproteinase (M12B) family. P-III subfamily. In terms of assembly, monomer. Requires Zn(2+) as cofactor. Expressed by the venom gland.

It is found in the secreted. Functionally, impairs hemostasis in the envenomed animal. Inhibits platelet aggregation induced by ADP, thrombin, platelet-activating factor and collagen. Acts by inhibiting fibrinogen interaction with platelet receptors GPIIb/GPIIIa (ITGA2B/ITGB3). The sequence is that of Zinc metalloproteinase/disintegrin from Gloydius brevicauda (Korean slamosa snake).